Consider the following 537-residue polypeptide: Chaperonin GroEL (537 aa).

ATP-binding positions include 29–32 (TLGP), 86–90 (DGTTT), Gly413, and Asp492.

This sequence belongs to the chaperonin (HSP60) family. As to quaternary structure, forms a cylinder of 14 subunits composed of two heptameric rings stacked back-to-back. Interacts with the co-chaperonin GroES.

The protein localises to the cytoplasm. The catalysed reaction is ATP + H2O + a folded polypeptide = ADP + phosphate + an unfolded polypeptide.. Its function is as follows. Together with its co-chaperonin GroES, plays an essential role in assisting protein folding. The GroEL-GroES system forms a nano-cage that allows encapsulation of the non-native substrate proteins and provides a physical environment optimized to promote and accelerate protein folding. This Dehalococcoides mccartyi (strain CBDB1) protein is Chaperonin GroEL.